The sequence spans 527 residues: Importin subunit alpha (527 aa).

The 58-residue stretch at 1-58 (MSLRPNSRTEARRSRYKVAVDAEEGRRRREDNMVEIRKNKREENLLKKRREGLLQAQQ) folds into the IBB domain. ARM repeat units follow at residues 109–151 (IEEV…TSEN), 152–196 (TKVV…YRDL), 197–234 (VLGHGALVALLAQFNEQAKLSMLRNATWTLSNFCRGKP), 235–279 (QPLF…DKIQ), 280–319 (AVIEAGVCSRLVELLLHSSPSVLIPALRTVGNIVTGDDIQ), 320–362 (TQVM…NRNQ), 363–403 (IQIV…GGNH), and 404–445 (DQIK…KIGE).

This sequence belongs to the importin alpha family. Forms a complex with importin subunit beta-1.

It is found in the cytoplasm. Its function is as follows. Binds specifically and directly to substrates containing either a simple or bipartite NLS motif. Promotes docking of import substrates to the nuclear envelope. Seems to act as a cytosolic receptor for both simple and bipartite NLS motifs. This Solanum lycopersicum (Tomato) protein is Importin subunit alpha.